The sequence spans 639 residues: Chaperone protein HtpG (639 aa).

The interval 1–347 is a; substrate-binding; it reads MSHQETHGFQ…SNDLPLNVSR (347 aa). Residues 348–564 form a b region; it reads EILQDNKITT…AGEMSSQMIK (217 aa). A c region spans residues 565–639; that stretch reads LMQAAGQAVT…MNKMLLASVK (75 aa).

This sequence belongs to the heat shock protein 90 family. Homodimer.

It localises to the cytoplasm. Molecular chaperone. Has ATPase activity. In Shewanella loihica (strain ATCC BAA-1088 / PV-4), this protein is Chaperone protein HtpG.